Here is a 1012-residue protein sequence, read N- to C-terminus: Tolloid-like protein 2 (1012 aa).

The N-terminal stretch at 1–21 (MPLATTLGTLVLLLLLPLPRG) is a signal peptide. The propeptide occupies 22 to 146 (AEVTGDHSNV…AKTFSARVRR (125 aa)). The disordered stretch occupies residues 83 to 135 (KPSIDKPGHDTGGLEETSARWPNDTASNASIQAPRKDGKDATTFLPNPGTSNT). Positions 126–135 (FLPNPGTSNT) are enriched in polar residues. The Peptidase M12A domain occupies 146–346 (RATTSRTERI…AQARKLYKCP (201 aa)). N-linked (GlcNAc...) asparagine glycosylation is present at Asn-168. Intrachain disulfides connect Cys-189–Cys-345, Cys-209–Cys-231, Cys-211–Cys-212, and Cys-348–Cys-374. His-239 provides a ligand contact to Zn(2+). Glu-240 is a catalytic residue. 2 residues coordinate Zn(2+): His-243 and His-249. CUB domains follow at residues 348 to 460 (CGET…YEAM) and 461 to 573 (CGGD…FFKE). Asn-358 and Asn-389 each carry an N-linked (GlcNAc...) asparagine glycan. 12 disulfide bridges follow: Cys-401–Cys-423, Cys-461–Cys-487, Cys-514–Cys-536, Cys-577–Cys-589, Cys-585–Cys-598, Cys-600–Cys-613, Cys-617–Cys-643, Cys-670–Cys-692, Cys-733–Cys-744, Cys-740–Cys-753, Cys-755–Cys-768, and Cys-773–Cys-799. Positions 573-614 (EVDECSWPDHGGCEQRCVNTLGSYTCACDPGYELAADKKTCE) constitute an EGF-like 1; calcium-binding domain. Residues 617–729 (CGGFITKLNG…RGFRAHFFSD (113 aa)) form the CUB 3 domain. A glycan (N-linked (GlcNAc...) asparagine) is linked at Asn-625. One can recognise an EGF-like 2; calcium-binding domain in the interval 729–769 (DKDECAKDNGGCQQECVNTFGSYLCRCRNGYRLHENGHDCK). CUB domains follow at residues 773 to 885 (CAYK…HSTE) and 886 to 1002 (CGGR…YTST). Asn-802 carries an N-linked (GlcNAc...) asparagine glycan. Cystine bridges form between Cys-826–Cys-848, Cys-886–Cys-916, and Cys-943–Cys-965. Omega-N-methylarginine occurs at positions 960 and 963.

Zn(2+) serves as cofactor.

Its subcellular location is the secreted. Protease which specifically processes pro-lysyl oxidase. Required for the embryonic development. Predominant protease, which in the development, influences dorsal-ventral patterning and skeletogenesis. This Mus musculus (Mouse) protein is Tolloid-like protein 2 (Tll2).